A 28-amino-acid chain; its full sequence is Morintide mO6 (28 aa).

The region spanning N1–C28 is the Chitin-binding type-1 domain. 2 disulfides stabilise this stretch: C4–C18 and C24–C28.

Seeds (at protein level).

Functionally, chitin-binding protein which functions in defense against chitin-containing fungal pathogens. This is Morintide mO6 from Moringa oleifera (Horseradish tree).